Consider the following 275-residue polypeptide: NH(3)-dependent NAD(+) synthetase (275 aa).

Residue 50–57 (GISGGVDS) participates in ATP binding. Asp-56 is a Mg(2+) binding site. Deamido-NAD(+) is bound at residue Arg-147. An ATP-binding site is contributed by Thr-167. Residue Glu-172 coordinates Mg(2+). Deamido-NAD(+) is bound by residues Lys-180 and Asp-187. Lys-196 and Thr-218 together coordinate ATP. 267 to 268 (HK) contributes to the deamido-NAD(+) binding site.

Belongs to the NAD synthetase family. Homodimer.

It catalyses the reaction deamido-NAD(+) + NH4(+) + ATP = AMP + diphosphate + NAD(+) + H(+). It functions in the pathway cofactor biosynthesis; NAD(+) biosynthesis; NAD(+) from deamido-NAD(+) (ammonia route): step 1/1. Functionally, catalyzes the ATP-dependent amidation of deamido-NAD to form NAD. Uses ammonia as a nitrogen source. The chain is NH(3)-dependent NAD(+) synthetase from Ectopseudomonas mendocina (strain ymp) (Pseudomonas mendocina).